A 580-amino-acid polypeptide reads, in one-letter code: mRNA-decapping enzyme 1A (580 aa).

Residue Ser62 is modified to Phosphoserine. Residues 132-141 (RSQQAARDKQ) show a composition bias toward basic and acidic residues. Disordered regions lie at residues 132-154 (RSQQAARDKQSPNQANGCSDHRP), 172-209 (QMGDSNISSPGLQPSTQISNLGSTETLEETPSGLQDKS), and 245-276 (LPGDASQKEPSSFLPFSFEPSGGGPQSENMGI). Phosphoserine is present on residues Ser142, Ser179, and Ser180. Positions 173–196 (MGDSNISSPGLQPSTQISNLGSTE) are enriched in polar residues. The span at 253–264 (EPSSFLPFSFEP) shows a compositional bias: low complexity. Residues Ser319 and Ser334 each carry the phosphoserine modification. Polar residues predominate over residues 343-359 (QAVKTTPRQRSPLSSQP). Positions 343–371 (QAVKTTPRQRSPLSSQPVPELSQASLAAS) are disordered. Phosphothreonine is present on Thr348. Residue Ser353 is modified to Phosphoserine. Residue Arg376 is modified to Asymmetric dimethylarginine. At Thr401 the chain carries Phosphothreonine. A phosphoserine mark is found at Ser422, Ser520, Ser521, and Ser523. A disordered region spans residues 510–533 (TRSSDLERKASSPSPLTVGTSENQ). Positions 520-531 (SSPSPLTVGTSE) are enriched in polar residues. Residues Thr526 and Thr529 each carry the phosphothreonine modification.

Belongs to the DCP1 family. Forms a complex with EDC3, DCP2, DDX6 and EDC4/HEDLS, within this complex directly interacts with EDC3. Part of a cytoplasmic complex containing proteins involved in mRNA decay, including XRN1 and LSM1. Interacts with DCP1B. Interacts with DCP2. Interacts with DDX17 in an RNA-independent manner. Interacts with PNRC2. Interacts with SMAD4. Interacts with UPF1. Interacts with ZC3HAV1. Interacts with ZFP36L1. Interacts with NBDY. Interacts with DHX34; the interaction is RNA-independent. (Microbial infection) Cleaved by porcine reproductive and respiratory syndrome virus serine protease nsp4 after Glu-238. The cleavage inhibits DCP1A function.

The protein localises to the cytoplasm. It localises to the P-body. Its subcellular location is the nucleus. It carries out the reaction a 5'-end (N(7)-methyl 5'-triphosphoguanosine)-ribonucleoside in mRNA + H2O = N(7)-methyl-GDP + a 5'-end phospho-ribonucleoside in mRNA + 2 H(+). Functionally, necessary for the degradation of mRNAs, both in normal mRNA turnover and in nonsense-mediated mRNA decay. Removes the 7-methyl guanine cap structure from mRNA molecules, yielding a 5'-phosphorylated mRNA fragment and 7m-GDP. Contributes to the transactivation of target genes after stimulation by TGFB1. Essential for embryonic development. The protein is mRNA-decapping enzyme 1A (DCP1A) of Sus scrofa (Pig).